A 158-amino-acid polypeptide reads, in one-letter code: MIRIGHGFDVHALGEARPLIIGGVKVPYHTGFIAHSDGDVVLHALTDALLGAVALGDIGKLFPDTDMQFKDIDSRILLREAFRRVKEKGYAVGNVDVTIIAQAPKMRPYIDAMRAVIAEDLQCGIDQVNVKATTTEKLGFTGRSEGIATEAVVLLVKA.

Positions 9 and 11 each coordinate a divalent metal cation. 4-CDP-2-C-methyl-D-erythritol 2-phosphate-binding positions include D9–H11 and H35–S36. An a divalent metal cation-binding site is contributed by H43. Residues D57–G59, F62–D66, T133–E136, F140, and R143 contribute to the 4-CDP-2-C-methyl-D-erythritol 2-phosphate site.

The protein belongs to the IspF family. In terms of assembly, homotrimer. A divalent metal cation is required as a cofactor.

The enzyme catalyses 4-CDP-2-C-methyl-D-erythritol 2-phosphate = 2-C-methyl-D-erythritol 2,4-cyclic diphosphate + CMP. The protein operates within isoprenoid biosynthesis; isopentenyl diphosphate biosynthesis via DXP pathway; isopentenyl diphosphate from 1-deoxy-D-xylulose 5-phosphate: step 4/6. Involved in the biosynthesis of isopentenyl diphosphate (IPP) and dimethylallyl diphosphate (DMAPP), two major building blocks of isoprenoid compounds. Catalyzes the conversion of 4-diphosphocytidyl-2-C-methyl-D-erythritol 2-phosphate (CDP-ME2P) to 2-C-methyl-D-erythritol 2,4-cyclodiphosphate (ME-CPP) with a corresponding release of cytidine 5-monophosphate (CMP). This chain is 2-C-methyl-D-erythritol 2,4-cyclodiphosphate synthase, found in Actinobacillus succinogenes (strain ATCC 55618 / DSM 22257 / CCUG 43843 / 130Z).